The chain runs to 134 residues: Small ribosomal subunit protein uS11 (134 aa).

The protein belongs to the universal ribosomal protein uS11 family. Component of the small ribosomal subunit.

The protein localises to the cytoplasm. In Encephalitozoon cuniculi (strain GB-M1) (Microsporidian parasite), this protein is Small ribosomal subunit protein uS11 (RPS14).